The sequence spans 317 residues: Beta-ketoacyl-[acyl-carrier-protein] synthase III (317 aa).

Catalysis depends on residues C112 and H244. The interval 245 to 249 is ACP-binding; the sequence is QANLR. N274 is an active-site residue.

The protein belongs to the thiolase-like superfamily. FabH family. Homodimer.

The protein resides in the cytoplasm. It catalyses the reaction malonyl-[ACP] + acetyl-CoA + H(+) = 3-oxobutanoyl-[ACP] + CO2 + CoA. Its pathway is lipid metabolism; fatty acid biosynthesis. Catalyzes the condensation reaction of fatty acid synthesis by the addition to an acyl acceptor of two carbons from malonyl-ACP. Catalyzes the first condensation reaction which initiates fatty acid synthesis and may therefore play a role in governing the total rate of fatty acid production. Possesses both acetoacetyl-ACP synthase and acetyl transacylase activities. Its substrate specificity determines the biosynthesis of branched-chain and/or straight-chain of fatty acids. The polypeptide is Beta-ketoacyl-[acyl-carrier-protein] synthase III (Salmonella paratyphi B (strain ATCC BAA-1250 / SPB7)).